We begin with the raw amino-acid sequence, 127 residues long: Large ribosomal subunit protein eL22x (127 aa).

The protein belongs to the eukaryotic ribosomal protein eL22 family.

The protein is Large ribosomal subunit protein eL22x (RPL22A) of Arabidopsis thaliana (Mouse-ear cress).